The chain runs to 77 residues: UPF0401 protein c3666 (77 aa).

It belongs to the UPF0401 family.

The chain is UPF0401 protein c3666 from Escherichia coli O6:H1 (strain CFT073 / ATCC 700928 / UPEC).